The following is a 194-amino-acid chain: Leucyl/phenylalanyl-tRNA--protein transferase (194 aa).

Belongs to the L/F-transferase family.

Its subcellular location is the cytoplasm. The catalysed reaction is N-terminal L-lysyl-[protein] + L-leucyl-tRNA(Leu) = N-terminal L-leucyl-L-lysyl-[protein] + tRNA(Leu) + H(+). It catalyses the reaction N-terminal L-arginyl-[protein] + L-leucyl-tRNA(Leu) = N-terminal L-leucyl-L-arginyl-[protein] + tRNA(Leu) + H(+). It carries out the reaction L-phenylalanyl-tRNA(Phe) + an N-terminal L-alpha-aminoacyl-[protein] = an N-terminal L-phenylalanyl-L-alpha-aminoacyl-[protein] + tRNA(Phe). Functionally, functions in the N-end rule pathway of protein degradation where it conjugates Leu, Phe and, less efficiently, Met from aminoacyl-tRNAs to the N-termini of proteins containing an N-terminal arginine or lysine. In Prosthecochloris aestuarii (strain DSM 271 / SK 413), this protein is Leucyl/phenylalanyl-tRNA--protein transferase.